We begin with the raw amino-acid sequence, 284 residues long: tRNA uridine(34) hydroxylase (284 aa).

The region spanning 132–226 (AGRPVVMLDT…YFEEVGGAHY (95 aa)) is the Rhodanese domain. The Cysteine persulfide intermediate role is filled by cysteine 186.

The protein belongs to the TrhO family.

It catalyses the reaction uridine(34) in tRNA + AH2 + O2 = 5-hydroxyuridine(34) in tRNA + A + H2O. Catalyzes oxygen-dependent 5-hydroxyuridine (ho5U) modification at position 34 in tRNAs. This Burkholderia orbicola (strain MC0-3) protein is tRNA uridine(34) hydroxylase.